Here is a 2437-residue protein sequence, read N- to C-terminus: Polyprotein P1234 (2437 aa).

Residues glutamate 28 to histidine 259 enclose the Alphavirus-like MT domain. Positions glycine 244–valine 263 are nsP1 membrane-binding. 2 S-palmitoyl cysteine; by host lipidation sites follow: cysteine 417 and cysteine 419. The (+)RNA virus helicase ATP-binding domain occupies aspartate 691–lysine 843. Glycine 722–serine 729 is an a ribonucleoside 5'-triphosphate binding site. In terms of domain architecture, (+)RNA virus helicase C-terminal spans serine 844–threonine 992. A Peptidase C9 domain is found at aspartate 1005–threonine 1327. Residues valine 1006–threonine 1025 are nucleolus localization signal. Catalysis depends on cysteine 1014, which acts as the For cysteine protease nsP2 activity. A Nuclear export signal motif is present at residues threonine 1059–serine 1068. The active-site For cysteine protease nsP2 activity is histidine 1084. The short motif at proline 1182 to valine 1186 is the Nuclear localization signal element. In terms of domain architecture, Macro spans alanine 1335 to arginine 1493. Residues aspartate 1344, asparagine 1358, glycine 1366, glycine 1446, isoleucine 1447, and phenylalanine 1448 each coordinate ADP-D-ribose. Zn(2+) contacts are provided by cysteine 1596, cysteine 1598, cysteine 1621, and cysteine 1639. Residues threonine 1675–phenylalanine 1684 show a composition bias toward low complexity. The segment at threonine 1675–asparagine 1729 is disordered. Short sequence motifs (FGDF; binding to host G3BP1) lie at residues phenylalanine 1792 to proline 1795 and phenylalanine 1804 to phenylalanine 1807. The region spanning aspartate 2191–alanine 2306 is the RdRp catalytic domain.

Interacts with non-structural protein 3. Interacts with RNA-directed RNA polymerase nsP4. Interacts with protease nsP2. interacts with itself. As to quaternary structure, interacts with mRNA-capping enzyme nsP1. Interacts with host DDX1. Interacts with host DDX3. Interacts (via C-terminus) with host G3BP1; this interaction inhibits the formation of host stress granules on viral mRNAs and the nsp3-G3BP1 complexes bind viral RNAs and probably orchestrate the assembly of viral replication complexes. Interacts (via C-terminus) with host G3BP2; this interaction inhibits the formation of host stress granules on viral mRNAs and the nsp3-G3BP2 complexes bind viral RNAs and probably orchestrate the assembly of viral replication complexes. In terms of assembly, interacts with mRNA-capping enzyme nsP1. Interacts with protease nsP2. interacts with itself. Interacts with RNA-directed RNA polymerase nsP4. Interacts with mRNA-capping enzyme nsP1. Interacts with KPNA1/karyopherin-alpha1; this interaction probably allows the active transport of protease nsP2 into the host nucleus. Interacts with host POLR2A/RPB1; this interaction seems to induce the depletion of host POLR2A and may play a role in the transcriptional shutoff induced by protease nsP2. Interacts with host GTF2E2/TF2E2; this interaction seems to induce the depletion of host GTF2E2/TF2E2 and may play a role in the transcriptional shutoff induced by protease nsP2. Mg(2+) serves as cofactor. The cofactor is Mn(2+). Specific enzymatic cleavages in vivo yield mature proteins. The processing of the polyprotein is temporally regulated. In early stages (1.7 hpi), P1234 is first cleaved in trans through its nsP2 protease activity, releasing P123' and nsP4, which associate to form the early replication complex. At the same time, P1234 is also cut at the nsP1/nsP2 site early in infection but with lower efficiency. After replication of the viral minus-strand RNAs (4 hpi), the polyproteins are cut at the nsP1/nsP2 and nsP2/nsP3 sites very efficiently, preventing accumulation of P123' and P1234 and allowing the formation of the late replication complex. NsP3'/nsP4 site is not cleaved anymore and P34 is produced rather than nsP4. Post-translationally, specific enzymatic cleavages in vivo yield mature proteins. The processing of the polyprotein is temporally regulated. In early stages (1.7 hpi), P123 is cleaved at the nsP1/nsP2 site with low efficiency. After replication of the viral minus-strand RNAs (4 hpi), the polyproteins are cut at the nsP1/nsP2 and nsP2/nsP3 sites very efficiently, preventing accumulation of P123 and allowing the formation of the late replication complex. In terms of processing, specific enzymatic cleavages in vivo yield mature proteins. The processing of the polyprotein is temporally regulated. In early stages (1.7 hpi), P123' is cleaved at the nsP1/nsP2 site with low efficiency. After replication of the viral minus-strand RNAs (4 hpi), the polyproteins are cut at the nsP1/nsP2 and nsP2/nsP3 sites very efficiently, preventing accumulation of P123' and allowing the formation of the late replication complex. Palmitoylated by host palmitoyltransferases ZDHHC2 and ZDHHC19. Post-translationally, phosphorylated by host on serines and threonines. In terms of processing, ubiquitinated; targets the protein for rapid degradation via the ubiquitin system. Nsp4 is present in extremely low quantities due to low frequency of translation through the amber stop-codon and the degradation by the ubiquitin pathway.

The protein localises to the host cytoplasmic vesicle membrane. The protein resides in the host cell membrane. It is found in the host cell projection. It localises to the host filopodium. Its subcellular location is the host nucleus. The protein localises to the host cytoplasm. It catalyses the reaction GTP + S-adenosyl-L-methionine = N(7)-methyl-GTP + S-adenosyl-L-homocysteine. The catalysed reaction is N(7)-methyl-GTP + L-histidyl-[protein] = N(tele)-(N(7)-methylguanosine 5'-phospho)-L-histidyl-[protein] + diphosphate. It carries out the reaction N(tele)-(N(7)-methylguanosine 5'-phospho)-L-histidyl-[protein] + a 5'-end diphospho-(purine-ribonucleoside) in mRNA + H(+) = a 5'-end (N(7)-methyl 5'-triphosphoguanosine)-(purine-ribonucleoside) in mRNA + L-histidyl-[protein]. The enzyme catalyses a 5'-end triphospho-ribonucleoside in mRNA + H2O = a 5'-end diphospho-ribonucleoside in mRNA + phosphate + H(+). It catalyses the reaction a ribonucleoside 5'-triphosphate + H2O = a ribonucleoside 5'-diphosphate + phosphate + H(+). The catalysed reaction is ATP + H2O = ADP + phosphate + H(+). It carries out the reaction RNA(n) + a ribonucleoside 5'-triphosphate = RNA(n+1) + diphosphate. The enzyme catalyses RNA(n) + ATP = RNA(n)-3'-adenine ribonucleotide + diphosphate. It catalyses the reaction 4-O-(ADP-D-ribosyl)-L-aspartyl-[protein] + H2O = L-aspartyl-[protein] + ADP-D-ribose + H(+). The catalysed reaction is 5-O-(ADP-D-ribosyl)-L-glutamyl-[protein] + H2O = L-glutamyl-[protein] + ADP-D-ribose + H(+). It carries out the reaction ADP-alpha-D-ribose 1''-phosphate + H2O = ADP-D-ribose + phosphate. Inactive precursor of the viral replicase, which is activated by cleavages carried out by the viral protease nsP2. Its function is as follows. The early replication complex formed by the polyprotein P123 and nsP4 synthesizes minus-strand RNAs. As soon P123 is cleaved into mature proteins, the plus-strand RNAs synthesis begins. In terms of biological role, the early replication complex formed by the polyprotein P123' and nsP4 synthesizes minus-strand RNAs. Polyprotein P123' is a short-lived polyprotein that accumulates during early stage of infection. As soon P123' is cleaved into mature proteins, the plus-strand RNAs synthesis begins. Functionally, cytoplasmic capping enzyme that catalyzes two virus-specific reactions: methyltransferase and nsP1 guanylyltransferase. mRNA-capping is necessary since all viral RNAs are synthesized in the cytoplasm, and host capping enzymes are restricted to the nucleus. The enzymatic reaction involves a covalent link between 7-methyl-GMP and nsP1, whereas eukaryotic capping enzymes form a covalent complex only with GMP. nsP1 capping consists in the following reactions: GTP is first methylated into 7-methyl-GMP and then is covalently linked to nsP1 to form the m7GMp-nsP1 complex from which 7-methyl-GMP complex is transferred to the mRNA to create the cap structure. NsP1 is needed for the initiation of the minus-strand RNAs synthesis. Probably serves as a membrane anchor for the replication complex composed of nsP1-nsP4. Palmitoylated nsP1 is remodeling host cell cytoskeleton, and induces filopodium-like structure formation at the surface of the host cell. Multifunctional protein whose N-terminus is part of the RNA polymerase complex and displays NTPase, RNA triphosphatase and helicase activities. NTPase and RNA triphosphatase are involved in viral RNA capping and helicase keeps a check on the dsRNA replication intermediates. The C-terminus harbors a protease that specifically cleaves the polyproteins and releases the mature proteins. Required for the shutoff of minus-strand RNAs synthesis. Specifically inhibits the host IFN response by promoting the nuclear export of host STAT1. Induces host transcription shutoff by inducing rapid proteasome-dependent degradation of POLR2A, a catalytic subunit of the RNAPII complex. The resulting inhibition of cellular protein synthesis serves to ensure maximal viral gene expression and to evade host immune response. Its function is as follows. Seems to be essential for minus-strand RNAs and subgenomic 26S mRNAs synthesis. Displays mono-ADP-ribosylhydrolase activity. ADP-ribosylation is a post-translational modification that controls various processes of the host cell and the virus probably needs to revert it for optimal viral replication. Binds proteins of FXR family and sequesters them into the viral RNA replication complexes thereby inhibiting the formation of host stress granules on viral mRNAs. The nsp3'-FXR complexes bind viral RNAs and probably orchestrate the assembly of viral replication complexes, thanks to the ability of FXR family members to self-assemble and bind DNA. In terms of biological role, seems to be essential for minus-strand RNAs and subgenomic 26S mRNAs synthesis. Displays mono-ADP-ribosylhydrolase activity. ADP-ribosylation is a post-translantional modification that controls various processes of the host cell and the virus probably needs to revert it for optimal viral replication. Binds proteins of G3BP family and sequesters them into the viral RNA replication complexes thereby inhibiting the formation of host stress granules on viral mRNAs. The nsp3-G3BP complexes bind viral RNAs and probably orchestrate the assembly of viral replication complexes, thanks to the ability of G3BP family members to self-assemble and bind DNA. Functionally, RNA dependent RNA polymerase. Replicates genomic and antigenomic RNA by recognizing replications specific signals. The early replication complex formed by the polyprotein P123 and nsP4 synthesizes minus-strand RNAs. The late replication complex composed of fully processed nsP1-nsP4 is responsible for the production of genomic and subgenomic plus-strand RNAs. The core catalytic domain of nsP4 also possesses terminal adenylyltransferase (TATase) activity that is probably involved in maintenance and repair of the poly(A) tail, an element required for replication of the viral genome. This Aedes aegypti (Yellowfever mosquito) protein is Polyprotein P1234.